The following is a 237-amino-acid chain: Carboxy-S-adenosyl-L-methionine synthase (237 aa).

S-adenosyl-L-methionine-binding positions include Tyr-40, 65–67 (GCS), 116–117 (DI), Asn-131, and Arg-194.

Belongs to the class I-like SAM-binding methyltransferase superfamily. Cx-SAM synthase family. Homodimer.

It carries out the reaction prephenate + S-adenosyl-L-methionine = carboxy-S-adenosyl-L-methionine + 3-phenylpyruvate + H2O. Functionally, catalyzes the conversion of S-adenosyl-L-methionine (SAM) to carboxy-S-adenosyl-L-methionine (Cx-SAM). In Dichelobacter nodosus (strain VCS1703A), this protein is Carboxy-S-adenosyl-L-methionine synthase.